The primary structure comprises 97 residues: Cobalt transport protein CbiN (97 aa).

A run of 2 helical transmembrane segments spans residues 6 to 26 (VLMI…YSGL) and 68 to 88 (SLLF…FFGY).

Belongs to the CbiN family. As to quaternary structure, forms an energy-coupling factor (ECF) transporter complex composed of an ATP-binding protein (A component, CbiO), a transmembrane protein (T component, CbiQ) and 2 possible substrate-capture proteins (S components, CbiM and CbiN) of unknown stoichimetry.

The protein resides in the cell membrane. Its pathway is cofactor biosynthesis; adenosylcobalamin biosynthesis. Functionally, part of the energy-coupling factor (ECF) transporter complex CbiMNOQ involved in cobalt import. This is Cobalt transport protein CbiN from Methanococcus maripaludis (strain C7 / ATCC BAA-1331).